An 895-amino-acid chain; its full sequence is Histone-lysine N-methyltransferase EZ3 (895 aa).

Residues 1–13 (MASSSKASDSSSQ) show a composition bias toward low complexity. Disordered stretches follow at residues 1–30 (MASSSKASDSSSQRSKRSDQGTGREAAPAS) and 396–446 (SSVS…PGKR). Polar residues predominate over residues 396-422 (SSVSAEESTTPPSADTSETENASSDMP). The segment covering 427–436 (RKYKISKRGP) has biased composition (basic residues). An SANT domain is found at 528–578 (TLSCWSALERDLYLKGIEIFGKNSCLIARNLLSGMKTCMEVANYMYNNGAA). The CXC domain maps to 628–732 (AGHPTVRKRI…SLGEPPARGD (105 aa)). The SET domain maps to 747-862 (QRILLGRSDV…ASEELFYDYR (116 aa)). The segment at 870-895 (AWARRPEGSKKDEASVSHHRAHKVAR) is disordered. Positions 873 to 885 (RRPEGSKKDEASV) are enriched in basic and acidic residues. Basic residues predominate over residues 886-895 (SHHRAHKVAR).

It belongs to the class V-like SAM-binding methyltransferase superfamily. Histone-lysine methyltransferase family. EZ subfamily. In terms of tissue distribution, widely expressed.

The protein localises to the nucleus. The enzyme catalyses L-lysyl(27)-[histone H3] + 3 S-adenosyl-L-methionine = N(6),N(6),N(6)-trimethyl-L-lysyl(27)-[histone H3] + 3 S-adenosyl-L-homocysteine + 3 H(+). Its function is as follows. Polycomb group (PcG) protein. Catalytic subunit of some PcG multiprotein complex, which methylates 'Lys-27' of histone H3, leading to transcriptional repression of the affected target genes. PcG proteins are not required to initiate repression, but to maintain it during later stages of development. This chain is Histone-lysine N-methyltransferase EZ3 (EZ3), found in Zea mays (Maize).